A 288-amino-acid chain; its full sequence is Probable endonuclease 4 (288 aa).

Residues histidine 75, histidine 115, glutamate 153, aspartate 187, histidine 190, histidine 224, aspartate 237, histidine 239, and glutamate 269 each coordinate Zn(2+).

This sequence belongs to the AP endonuclease 2 family. Zn(2+) serves as cofactor.

It catalyses the reaction Endonucleolytic cleavage to 5'-phosphooligonucleotide end-products.. Its function is as follows. Endonuclease IV plays a role in DNA repair. It cleaves phosphodiester bonds at apurinic or apyrimidinic (AP) sites, generating a 3'-hydroxyl group and a 5'-terminal sugar phosphate. This is Probable endonuclease 4 from Chlamydia trachomatis serovar A (strain ATCC VR-571B / DSM 19440 / HAR-13).